The chain runs to 35 residues: Pheromone-binding protein 2 (35 aa).

It belongs to the PBP/GOBP family. Homodimer. In terms of tissue distribution, antenna.

Functionally, this major soluble protein in olfactory sensilla of male moths might serve to solubilize the extremely hydrophobic pheromone molecules and to transport pheromone through the aqueous lymph to receptors located on olfactory cilia. The polypeptide is Pheromone-binding protein 2 (Lymantria dispar (Gypsy moth)).